Here is a 517-residue protein sequence, read N- to C-terminus: Crotonobetaine/carnitine--CoA ligase (517 aa).

This sequence belongs to the ATP-dependent AMP-binding enzyme family.

It catalyses the reaction 4-(trimethylamino)butanoate + ATP + CoA = 4-(trimethylamino)butanoyl-CoA + AMP + diphosphate. It carries out the reaction crotonobetaine + ATP + CoA = crotonobetainyl-CoA + AMP + diphosphate. The catalysed reaction is (R)-carnitine + ATP + CoA = (R)-carnitinyl-CoA + AMP + diphosphate. It participates in amine and polyamine metabolism; carnitine metabolism. In terms of biological role, catalyzes the transfer of CoA to carnitine, generating the initial carnitinyl-CoA needed for the CaiB reaction cycle. Also has activity toward crotonobetaine and gamma-butyrobetaine. The polypeptide is Crotonobetaine/carnitine--CoA ligase (Salmonella arizonae (strain ATCC BAA-731 / CDC346-86 / RSK2980)).